The chain runs to 253 residues: 5'-nucleotidase SurE (253 aa).

Residues D8, D9, S39, and N95 each contribute to the a divalent metal cation site.

The protein belongs to the SurE nucleotidase family. A divalent metal cation serves as cofactor.

It localises to the cytoplasm. The enzyme catalyses a ribonucleoside 5'-phosphate + H2O = a ribonucleoside + phosphate. In terms of biological role, nucleotidase that shows phosphatase activity on nucleoside 5'-monophosphates. The sequence is that of 5'-nucleotidase SurE from Kosmotoga olearia (strain ATCC BAA-1733 / DSM 21960 / TBF 19.5.1).